Consider the following 471-residue polypeptide: Maintenance of mitochondrial morphology protein 1 (471 aa).

Topologically, residues 1-21 are lumenal; that stretch reads MSSPQNTSCPPSQHSLSFTQG. A helical membrane pass occupies residues 22-42; that stretch reads LLLGQLSVVLLIGAFIKFFIF. Topologically, residues 43-471 are cytoplasmic; that stretch reads GESPSSSSRG…GSLPGAPAVA (429 aa). The region spanning 128-370 is the SMP-LTD domain; it reads QPESLDWFNV…EPRVQLVALP (243 aa). Disordered stretches follow at residues 271 to 306, 395 to 415, and 448 to 471; these read GTTE…GVRS, EDPA…NRDG, and RGDT…PAVA. Residues 280–295 show a composition bias toward basic and acidic residues; sequence PHPENQNESKPSRQDP. Residues 401–410 show a composition bias toward polar residues; it reads ATHSGFTPVN.

Belongs to the MMM1 family. As to quaternary structure, homodimer. Component of the ER-mitochondria encounter structure (ERMES) or MDM complex, composed of MMM1, MDM10, MDM12 and MDM34. An MMM1 homodimer associates with one molecule of MDM12 on each side in a pairwise head-to-tail manner, and the SMP-LTD domains of MMM1 and MDM12 generate a continuous hydrophobic tunnel for phospholipid trafficking.

Its subcellular location is the endoplasmic reticulum membrane. Component of the ERMES/MDM complex, which serves as a molecular tether to connect the endoplasmic reticulum (ER) and mitochondria. Components of this complex are involved in the control of mitochondrial shape and protein biogenesis, and function in nonvesicular lipid trafficking between the ER and mitochondria. The MDM12-MMM1 subcomplex functions in the major beta-barrel assembly pathway that is responsible for biogenesis of all outer membrane beta-barrel proteins, and acts in a late step after the SAM complex. The MDM10-MDM12-MMM1 subcomplex further acts in the TOM40-specific pathway after the action of the MDM12-MMM1 complex. Essential for establishing and maintaining the structure of mitochondria and maintenance of mtDNA nucleoids. This is Maintenance of mitochondrial morphology protein 1 from Arthroderma otae (strain ATCC MYA-4605 / CBS 113480) (Microsporum canis).